A 172-amino-acid polypeptide reads, in one-letter code: Tail tube protein (172 aa).

This sequence belongs to the P2likevirus major tail tube protein family.

The protein localises to the virion. Functionally, forms the virus tail tube. This is Tail tube protein (FII) from Escherichia phage P2 (Bacteriophage P2).